An 84-amino-acid polypeptide reads, in one-letter code: UPF0512 protein O (84 aa).

It belongs to the UPF0512 family.

This is UPF0512 protein O from Dictyostelium discoideum (Social amoeba).